Consider the following 201-residue polypeptide: MKVHMLVGVLVMVGFTVGKVPVPDIRTCHFCLVEDPSVGCISGSEKCTISSSSLCMVITIYYDVKVRFIVRGCGQYISYRCQEKRNTYFAEYWYQAQCCQYDYCNSWSSPQLQSSLPEPHDRPLALPLSDSQIQWFYQALNLSLPLPNFHAGTEPDGLDPMVTLSLNLGLSFAELRRMYLFLNSSGLLVLPQAGLLTPHPS.

The signal sequence occupies residues 1–18 (MKVHMLVGVLVMVGFTVG). The UPAR/Ly6 domain maps to 26–118 (RTCHFCLVED…SPQLQSSLPE (93 aa)). 5 disulfide bridges follow: Cys28–Cys55, Cys31–Cys40, Cys47–Cys73, Cys81–Cys98, and Cys99–Cys104. 2 N-linked (GlcNAc...) asparagine glycosylation sites follow: Asn141 and Asn183.

Forms oligomer. In terms of processing, N-glycosylated.

It localises to the secreted. The polypeptide is Lymphocyte antigen 6 complex locus protein G5b (LY6G5B) (Homo sapiens (Human)).